A 93-amino-acid chain; its full sequence is C-C motif chemokine 17 (93 aa).

Residues 1–23 form the signal peptide; the sequence is MMSLQMLLLAALLLGTSLQHASA. Cystine bridges form between cysteine 33/cysteine 57 and cysteine 34/cysteine 73.

This sequence belongs to the intercrine beta (chemokine CC) family.

It is found in the secreted. Its function is as follows. Chemokine, which displays chemotactic activity for T lymphocytes, preferentially Th2 cells, but not monocytes or granulocytes. Therefore plays an important role in a wide range of inflammatory and immunological processes. Acts by binding to CCR4 at T-cell surface. Mediates GM-CSF/CSF2-driven pain and inflammation. In the brain, required to maintain the typical, highly branched morphology of hippocampal microglia under homeostatic conditions. May be important for the appropriate adaptation of microglial morphology and synaptic plasticity to acute lipopolysaccharide (LPS)-induced neuroinflammation. Plays a role in wound healing, mainly by inducing fibroblast migration into the wound. The sequence is that of C-C motif chemokine 17 (Ccl17) from Rattus norvegicus (Rat).